The following is a 206-amino-acid chain: Glycerol-3-phosphate acyltransferase (206 aa).

The next 6 helical transmembrane spans lie at 4 to 24, 55 to 75, 78 to 98, 112 to 132, 137 to 157, and 158 to 178; these read IIGILILGYLLGSIPFALLVG, IIVLIGDLGKGAVASLVPILL, ELHPLFAGLAAVVGHIYPVFA, MLLVTSPILFLVLLISFLTTL, MVSLSSIVSASIGIVAAITIG, and IVEQDWIVPTFFTILALFVIF.

The protein belongs to the PlsY family. In terms of assembly, probably interacts with PlsX.

The protein resides in the cell membrane. It catalyses the reaction an acyl phosphate + sn-glycerol 3-phosphate = a 1-acyl-sn-glycero-3-phosphate + phosphate. It participates in lipid metabolism; phospholipid metabolism. Its function is as follows. Catalyzes the transfer of an acyl group from acyl-phosphate (acyl-PO(4)) to glycerol-3-phosphate (G3P) to form lysophosphatidic acid (LPA). This enzyme utilizes acyl-phosphate as fatty acyl donor, but not acyl-CoA or acyl-ACP. This is Glycerol-3-phosphate acyltransferase from Exiguobacterium sibiricum (strain DSM 17290 / CCUG 55495 / CIP 109462 / JCM 13490 / 255-15).